The chain runs to 779 residues: MINQENNDLYDLNEALKVENLTLNDYEEICKRLKRKPNRTELGMFGVMWSEHCCYRNSKPLLSKFPTEGKHVLVGPGENAGVIDVGNNQKLVFKIESHNHPSAIEPFQGAATGVGGILRDIFTMGARPIAVLNSLRFGNLDKSSNVDLLRGVVSGIAHYGNCVGVPTVGGEIDFDDSYSGNPLVNVMALGLLETEEIVCSGAKNVGSPVLYVGNTTGRDGVGGASFASSELTTTSLDDRPAVQVGDPFIEKSLIEACLDAFKTGDVIAAQDMGAAGLTCSSAEMAANGKLGISIDLDLVPSREDDMSSYQYLLSESQERMLFVVKEEKINDLIEKFSKWGLYASVVGEVIGTNEVIISHKGKIVAKIPTSALSDDTPVNFHNVINNPPDDLLKKWEWKENDLPEIHEKNIFSLKENKNFSFSEIILKLLSNPSIASKRWIYKQYDSQVQSNTVFTPGKSDAAVIRLREQNKKNKSKVFSGVAASVDCNSRWVALDPFRGSIAAVAESARNVSCVGAEPVAITNNLNFSSPENEIGYWQLSSSCNGIAEACKALETPVTGGNVSLYNESKNKDNLITPINPTPVIGMVGKLDNVEKAISSEWKNIEDQIWLIGSHKSETKIAASSYLEYFHGEITGRPPKIDLLDEKFCQSFLRNAILKSLVVSSHDISDGGLAIALAESCILSERGATIELEKDLNRVDNLLFAEGGSRIIFTISKMKQNEWFNYLQLNQIKFPSSVYVKKIGYVSSDTLKIKIDEKNICNIRVEELTEKFNNSISDYF.

His52 is an active-site residue. Residues Tyr55 and Lys94 each coordinate ATP. Glu96 is a Mg(2+) binding site. Residues 97–100 (SHNH) and Arg119 contribute to the substrate site. The Proton acceptor role is filled by His98. Asp120 is a Mg(2+) binding site. Gln243 is a substrate binding site. Asp271 provides a ligand contact to Mg(2+). Position 315–317 (315–317 (ESQ)) interacts with substrate. Asn523 and Gly560 together coordinate ATP. Residue Asn561 participates in Mg(2+) binding. Substrate is bound at residue Ser563.

It belongs to the FGAMS family. In terms of assembly, monomer. Part of the FGAM synthase complex composed of 1 PurL, 1 PurQ and 2 PurS subunits.

It is found in the cytoplasm. It carries out the reaction N(2)-formyl-N(1)-(5-phospho-beta-D-ribosyl)glycinamide + L-glutamine + ATP + H2O = 2-formamido-N(1)-(5-O-phospho-beta-D-ribosyl)acetamidine + L-glutamate + ADP + phosphate + H(+). It participates in purine metabolism; IMP biosynthesis via de novo pathway; 5-amino-1-(5-phospho-D-ribosyl)imidazole from N(2)-formyl-N(1)-(5-phospho-D-ribosyl)glycinamide: step 1/2. Part of the phosphoribosylformylglycinamidine synthase complex involved in the purines biosynthetic pathway. Catalyzes the ATP-dependent conversion of formylglycinamide ribonucleotide (FGAR) and glutamine to yield formylglycinamidine ribonucleotide (FGAM) and glutamate. The FGAM synthase complex is composed of three subunits. PurQ produces an ammonia molecule by converting glutamine to glutamate. PurL transfers the ammonia molecule to FGAR to form FGAM in an ATP-dependent manner. PurS interacts with PurQ and PurL and is thought to assist in the transfer of the ammonia molecule from PurQ to PurL. The protein is Phosphoribosylformylglycinamidine synthase subunit PurL of Prochlorococcus marinus (strain MIT 9215).